The chain runs to 348 residues: NADH-ubiquinone oxidoreductase chain 2 (348 aa).

Helical transmembrane passes span 1–21 (MNPY…TLTF), 25–45 (HWIL…PLMA), 60–80 (FLIQ…NAWI), 99–119 (MFAL…PEVL), 124–144 (LLTG…LIIQ), 151–171 (PLIL…SGLN), 178–197 (ILAY…IQYA), 202–224 (LIAL…VLSA), 239–259 (ILAA…PLTG), 274–294 (DLPA…FFYL), and 326–346 (LTIS…ILML).

This sequence belongs to the complex I subunit 2 family. In terms of assembly, core subunit of respiratory chain NADH dehydrogenase (Complex I) which is composed of 45 different subunits.

The protein resides in the mitochondrion inner membrane. It carries out the reaction a ubiquinone + NADH + 5 H(+)(in) = a ubiquinol + NAD(+) + 4 H(+)(out). Core subunit of the mitochondrial membrane respiratory chain NADH dehydrogenase (Complex I) which catalyzes electron transfer from NADH through the respiratory chain, using ubiquinone as an electron acceptor. Essential for the catalytic activity and assembly of complex I. This is NADH-ubiquinone oxidoreductase chain 2 (mt-nd2) from Danio rerio (Zebrafish).